Here is a 558-residue protein sequence, read N- to C-terminus: Atlastin-1 (558 aa).

The segment at 1-28 (MAKNRRDRNSWGGFSEKTYEWSSEEEEP) is disordered. The interval 1–34 (MAKNRRDRNSWGGFSEKTYEWSSEEEEPVKKAGP) is N-terminal hypervariable region (HVR). Topologically, residues 1–449 (MAKNRRDRNS…NIFHAARTPA (449 aa)) are cytoplasmic. Phosphoserine is present on residues serine 10, serine 22, and serine 23. Residues 64 to 309 (DKEVVAVSVA…LIPWLLSPES (246 aa)) enclose the GB1/RHD3-type G domain. GDP contacts are provided by arginine 77, lysine 78, glycine 79, lysine 80, serine 81, phenylalanine 82, glutamine 148, arginine 217, aspartate 218, valine 276, and asparagine 279. Residues arginine 77, lysine 78, glycine 79, lysine 80, serine 81, and phenylalanine 82 each coordinate GTP. Residue serine 81 participates in Mg(2+) binding. Residues arginine 217, aspartate 218, and valine 276 each coordinate GTP. Residues 347-438 (MLQATAEANN…YIQYIKHNDS (92 aa)) are 3HB (three-helix bundle) domain. Lysine 395 is modified (N6-acetyllysine). The stretch at 418–439 (LQQLETEIDELYIQYIKHNDSK) forms a coiled coil. Residues 439-447 (KNIFHAART) form a linker region. Residues 450–470 (TLFVVIFITYVIAGVTGFIGL) form a helical membrane-spanning segment. A topological domain (lumenal) is located at residue aspartate 471. A helical membrane pass occupies residues 472-492 (IIASLCNMIMGLTLITLCTWA). At 493–558 (YIRYSGEYRE…STEQSEKKKM (66 aa)) the chain is on the cytoplasmic side. Residues 521–558 (NEALYKLYSAAATHRHLYHQAFPAPKSESTEQSEKKKM) are autoinhibitory domain.

This sequence belongs to the TRAFAC class dynamin-like GTPase superfamily. GB1/RHD3 GTPase family. GB1 subfamily. Monomeric and homodimeric. The homodimer, transiently formed by two molecules on opposing membranes, is the active form mediating ER membrane fusion. Interacts with REEP1, REEP5, RTN3 and RTN4 (via the transmembrane region); these proteins are involved in endoplasmic reticulum tubular network organization. Interacts with ZFYVE27; both proteins are involved in endoplasmic reticulum tubular network organization. Interacts with ARL6IP1; both proteins are involved in endoplasmic reticulum tubular network organization. Interacts with SPAST; the interaction is direct, could recruit SPAST to Golgi membranes. Interacts (via N-terminal region) with MAP4K4 (via CNH regulatory domain). May interact with TMED2. Interacts with CPT1C. In terms of processing, phosphorylated. Phosphorylation, by different kinases, of the N-terminal hypervariable region (HVR) regulates the ATL1-mediated membrane tethering step.

The protein localises to the endoplasmic reticulum membrane. Its subcellular location is the golgi apparatus membrane. The protein resides in the cell projection. It is found in the axon. It catalyses the reaction GTP + H2O = GDP + phosphate + H(+). Atlastin-1 (ATL1) is a membrane-anchored GTPase that mediates the GTP-dependent fusion of endoplasmic reticulum (ER) membranes, maintaining the continuous ER network. It facilitates the formation of three-way junctions where ER tubules intersect. Two atlastin-1 on neighboring ER tubules bind GTP and form loose homodimers through the GB1/RHD3-type G domains and 3HB regions. Upon GTP hydrolysis, the 3HB regions tighten, pulling the membranes together to drive their fusion. After fusion, the homodimer disassembles upon release of inorganic phosphate (Pi). Subsequently, GDP dissociates, resetting the monomers to a conformation ready for a new fusion cycle. May also regulate more or less directly Golgi biogenesis. Indirectly regulates axonal development. The chain is Atlastin-1 from Bos taurus (Bovine).